A 163-amino-acid chain; its full sequence is Beta-lactoglobulin-2 (163 aa).

2 disulfides stabilise this stretch: Cys-66/Cys-161 and Cys-106/Cys-120.

This sequence belongs to the calycin superfamily. Lipocalin family. In terms of assembly, monomer.

The protein localises to the secreted. Functionally, lactoglobulin is the primary component of whey, it binds retinol and is probably involved in the transport of that molecule. The protein is Beta-lactoglobulin-2 (LGB2) of Equus asinus (Donkey).